The primary structure comprises 290 residues: Oxaloacetate decarboxylase (290 aa).

A substrate-binding site is contributed by serine 53. Aspartate 91 provides a ligand contact to Mg(2+). Substrate contacts are provided by arginine 162 and histidine 238.

The protein belongs to the isocitrate lyase/PEP mutase superfamily. Oxaloacetate decarboxylase family. In terms of assembly, homotetramer; dimer of dimers. Mg(2+) serves as cofactor.

It carries out the reaction oxaloacetate + H(+) = pyruvate + CO2. Functionally, catalyzes the decarboxylation of oxaloacetate into pyruvate. Seems to play a role in maintaining cellular concentrations of bicarbonate and pyruvate. The chain is Oxaloacetate decarboxylase from Ectopseudomonas mendocina (strain ymp) (Pseudomonas mendocina).